The following is a 314-amino-acid chain: Fibrinogen-like protein 1 (314 aa).

An N-terminal signal peptide occupies residues Met1 to Ala22. Residues Cys28–Val62 are a coiled coil. Residues Leu76–Asp308 enclose the Fibrinogen C-terminal domain. 2 disulfide bridges follow: Cys85-Cys114 and Cys250-Cys263.

Homodimer. Interacts (via the Fibrinogen C-terminal domain) with LAG3 (via Ig-like domains 1 and 2). In terms of tissue distribution, mainly expressed in liver. Also expressed in brown adipose tissue.

It is found in the secreted. Functionally, immune suppressive molecule that inhibits antigen-specific T-cell activation by acting as a major ligand of LAG3. Responsible for LAG3 T-cell inhibitory function. Binds LAG3 independently from MHC class II (MHC-II). Secreted by, and promotes growth of, hepatocytes. This Mus musculus (Mouse) protein is Fibrinogen-like protein 1 (Fgl1).